The sequence spans 413 residues: NADH:flavin oxidoreductase FG08077 (413 aa).

53 to 56 (APLC) provides a ligand contact to FMN. A substrate-binding site is contributed by Y58. Positions 88 and 130 each coordinate FMN. 211 to 214 (HAAH) is a substrate binding site. Residues R264 and 370-371 (GR) each bind FMN.

The protein belongs to the NADH:flavin oxidoreductase/NADH oxidase family. NamA subfamily. The cofactor is FMN.

The protein operates within mycotoxin biosynthesis. NADH:flavin oxidoreductase; part of the gene cluster that mediates the biosynthesis of butenolide, a mycotoxin that shows antibiotic activity but does not seem to play a major role in the spread of head blight in wheat. Butenolide is derived from glutamic acid via a 4-acetamido-2-butenoic acid intermediate. The predicted function of the NADH:flavin oxidoreductase FG08077, the cytochrome P450 monooxygenase FG08079, the decarboxylase FG08083, and the putative acetyltransferase FG08082 are consistent with this pathway, however, the respective activities of the butelonide biosynthesis cluster enzymes have still to be experimentally determined. This chain is NADH:flavin oxidoreductase FG08077, found in Gibberella zeae (strain ATCC MYA-4620 / CBS 123657 / FGSC 9075 / NRRL 31084 / PH-1) (Wheat head blight fungus).